Here is a 176-residue protein sequence, read N- to C-terminus: MNGDEDWLTVGKVVAAQGMQGELRINPSSDFPERFTLPGQRWLKERNGEPRPIELLTGRQLPGRSLYVVKFAGVNNRNAAEALVGQKLLVPSSDRPSLAEGEFHLLDLVGLEARLQAEGPAIGHVIDLTTAGNDLLEIELLTGRRVLVPFVEAIVPEVQLNQGWLRLTPPPGLLEL.

The PRC barrel domain occupies 100 to 173 (EGEFHLLDLV…WLRLTPPPGL (74 aa)).

The protein belongs to the RimM family. In terms of assembly, binds ribosomal protein uS19.

It localises to the cytoplasm. In terms of biological role, an accessory protein needed during the final step in the assembly of 30S ribosomal subunit, possibly for assembly of the head region. Essential for efficient processing of 16S rRNA. May be needed both before and after RbfA during the maturation of 16S rRNA. It has affinity for free ribosomal 30S subunits but not for 70S ribosomes. The protein is Ribosome maturation factor RimM of Prochlorococcus marinus (strain MIT 9313).